A 172-amino-acid chain; its full sequence is uncharacterized protein (172 aa).

A compositionally biased stretch (basic and acidic residues) spans 1 to 17 (MISLDKDENEIEHHNEE). The disordered stretch occupies residues 1 to 27 (MISLDKDENEIEHHNEENSLVEQETAP). The chain crosses the membrane as a helical span at residues 129–151 (IVTVLIGIIVAIFVLVVIGIAAF).

Its subcellular location is the membrane. This is an uncharacterized protein from Bacillus subtilis (strain 168).